Reading from the N-terminus, the 242-residue chain is uncharacterized protein (242 aa).

Residues 2-62 (EKAYKILSVQ…VEKPSVIFED (61 aa)) form the S4 RNA-binding domain. The active site involves aspartate 93.

This sequence belongs to the pseudouridine synthase RluA family.

It carries out the reaction a uridine in RNA = a pseudouridine in RNA. This is an uncharacterized protein from Helicobacter pylori (strain ATCC 700392 / 26695) (Campylobacter pylori).